Here is a 530-residue protein sequence, read N- to C-terminus: Hyccin 2 (530 aa).

Phosphothreonine occurs at positions 30 and 306. Phosphoserine occurs at positions 321 and 341. The interval 328–410 is disordered; that stretch reads RREGAEGVNG…DSVVRKQYVQ (83 aa). Over residues 353 to 373 the composition is skewed to polar residues; it reads SGASLSSQPIGTKPSSSSQRG. Phosphoserine is present on residues Ser-430, Ser-442, Ser-444, and Ser-491. A disordered region spans residues 498–530; sequence GQAGEGKELLSPGAPLTKQSRSPSFNMQLISQV. Over residues 514-530 the composition is skewed to polar residues; it reads TKQSRSPSFNMQLISQV.

The protein belongs to the Hyccin family. As to quaternary structure, component of a phosphatidylinositol 4-kinase (PI4K) complex, composed of PI4KA, EFR3 (EFR3A or EFR3B), TTC7 (TTC7A or TTC7B) and HYCC (HYCC1 or HYCC2).

It localises to the cytoplasm. Its subcellular location is the cytosol. It is found in the cell membrane. Component of a complex required to localize phosphatidylinositol 4-kinase (PI4K) to the plasma membrane. This Pongo abelii (Sumatran orangutan) protein is Hyccin 2 (HYCC2).